The primary structure comprises 124 residues: Oligopeptide-binding protein OppA (124 aa).

Belongs to the bacterial solute-binding protein 5 family. In terms of assembly, the complex is composed of two ATP-binding proteins (OppD and OppF), two transmembrane proteins (OppB and OppC) and a solute-binding protein (OppA).

Its subcellular location is the cell membrane. Functionally, part of the ABC transporter complex OppABCDF involved in the uptake of oligopeptides. The polypeptide is Oligopeptide-binding protein OppA (oppA) (Lactococcus lactis subsp. cremoris (Streptococcus cremoris)).